Here is a 150-residue protein sequence, read N- to C-terminus: Endoribonuclease YbeY (150 aa).

3 residues coordinate Zn(2+): His-112, His-116, and His-122.

Belongs to the endoribonuclease YbeY family. Zn(2+) is required as a cofactor.

It is found in the cytoplasm. Functionally, single strand-specific metallo-endoribonuclease involved in late-stage 70S ribosome quality control and in maturation of the 3' terminus of the 16S rRNA. In Geobacter metallireducens (strain ATCC 53774 / DSM 7210 / GS-15), this protein is Endoribonuclease YbeY.